The chain runs to 192 residues: Inosine triphosphate pyrophosphatase (192 aa).

ITP is bound at residue 11 to 16 (TGNKNK). E41 contacts Mg(2+). Residues K53, 69 to 70 (DT), K86, 146 to 149 (FGWD), K169, and 174 to 175 (HR) each bind ITP.

It belongs to the HAM1 NTPase family. In terms of assembly, homodimer. It depends on Mg(2+) as a cofactor. Mn(2+) is required as a cofactor.

The protein resides in the cytoplasm. The catalysed reaction is ITP + H2O = IMP + diphosphate + H(+). It catalyses the reaction dITP + H2O = dIMP + diphosphate + H(+). It carries out the reaction XTP + H2O = XMP + diphosphate + H(+). Its function is as follows. Pyrophosphatase that hydrolyzes non-canonical purine nucleotides such as inosine triphosphate (ITP), deoxyinosine triphosphate (dITP) or xanthosine 5'-triphosphate (XTP) to their respective monophosphate derivatives. The enzyme does not distinguish between the deoxy- and ribose forms. Probably excludes non-canonical purines from RNA and DNA precursor pools, thus preventing their incorporation into RNA and DNA and avoiding chromosomal lesions. This Ciona intestinalis (Transparent sea squirt) protein is Inosine triphosphate pyrophosphatase.